We begin with the raw amino-acid sequence, 842 residues long: Molybdenum cofactor sulfurase (842 aa).

The residue at position 236 (lysine 236) is an N6-(pyridoxal phosphate)lysine. Residue cysteine 402 is part of the active site. Residues 637–680 (PGSQHGDAQRSSKARLQKHQITTDQESDVQEVHPGSGTTTDSTW) form a disordered region. The 169-residue stretch at 663–831 (SDVQEVHPGS…AARGDVAYPT (169 aa)) folds into the MOSC domain.

Belongs to the class-V pyridoxal-phosphate-dependent aminotransferase family. MOCOS subfamily. It depends on pyridoxal 5'-phosphate as a cofactor.

The enzyme catalyses Mo-molybdopterin + L-cysteine + AH2 = thio-Mo-molybdopterin + L-alanine + A + H2O. Its pathway is cofactor biosynthesis; molybdopterin biosynthesis. Its function is as follows. Sulfurates the molybdenum cofactor. Sulfation of molybdenum is essential for xanthine dehydrogenase (XDH) and aldehyde oxidase (ADO) enzymes in which molybdenum cofactor is liganded by 1 oxygen and 1 sulfur atom in active form. This is Molybdenum cofactor sulfurase from Pyricularia oryzae (strain 70-15 / ATCC MYA-4617 / FGSC 8958) (Rice blast fungus).